Consider the following 411-residue polypeptide: Putative ion-transport protein YfeO (411 aa).

11 helical membrane-spanning segments follow: residues 9-29, 54-74, 99-119, 149-169, 186-206, 223-243, 258-278, 296-316, 322-342, 343-363, and 386-406; these read MLLL…VLIA, DSPF…GLII, ALPG…SLGP, ILAS…AALI, LFAP…FFHP, IASG…AVWC, VLIL…GGPL, LGAG…VIAA, GGRI…LHAH, VEAV…VLVV, and LLCI…LLAA.

This sequence belongs to the chloride channel (TC 2.A.49) family.

It localises to the cell membrane. This Salmonella paratyphi A (strain ATCC 9150 / SARB42) protein is Putative ion-transport protein YfeO.